The primary structure comprises 222 residues: MKCFLICGSKKEPISINGTPNVVKSKYFEGDVKVRLRDYETPDEEYFEQSNDTCSIMIRGRFLPTESTLTADDILFGNQFEKPLRDVLPMGSNLLMKGLQYVDPSIEFDLYCDQPWAFSPFFATMTKMQVSDALLPMEYFEDHSSRRSQMQQQVIRQESSIDPNKYILADFCNPFFNPSTLSISIPYTKMSFSIKNYYNGQPLRYFCKTRDGNVIFAVEFDL.

The protein belongs to the UPF0590 family.

It localises to the cytoplasm. The protein localises to the nucleus. The protein is DUF1769 family protein of Schizosaccharomyces pombe (strain 972 / ATCC 24843) (Fission yeast).